The primary structure comprises 272 residues: Enoyl-[acyl-carrier-protein] reductase [NADH] 1 (272 aa).

NAD(+)-binding positions include Gly17, Ser23 to Ile24, Gln44, Asp68 to Val69, and Ile96. Residues Tyr149 and Tyr159 each act as proton acceptor in the active site. Residues Lys166 and Ile195–Ala199 contribute to the NAD(+) site.

Belongs to the short-chain dehydrogenases/reductases (SDR) family. FabI subfamily.

The protein localises to the cell inner membrane. It catalyses the reaction a 2,3-saturated acyl-[ACP] + NAD(+) = a (2E)-enoyl-[ACP] + NADH + H(+). It functions in the pathway lipid metabolism; fatty acid biosynthesis. The polypeptide is Enoyl-[acyl-carrier-protein] reductase [NADH] 1 (fabI1) (Rhizobium meliloti (strain 1021) (Ensifer meliloti)).